Reading from the N-terminus, the 340-residue chain is GTPase Obg (340 aa).

An Obg domain is found at 1–158; that stretch reads MSFIDEAKVY…KYITLKLKII (158 aa). The region spanning 159-325 is the OBG-type G domain; it reads SDIGIIGLPN…LSTLIQYIHK (167 aa). GTP contacts are provided by residues 165–172, 190–194, 211–214, 278–281, and 306–308; these read GLPNAGKS, FTTLE, DIPG, NKSD, and SSI. Serine 172 and threonine 192 together coordinate Mg(2+).

It belongs to the TRAFAC class OBG-HflX-like GTPase superfamily. OBG GTPase family. In terms of assembly, monomer. Mg(2+) is required as a cofactor.

Its subcellular location is the cytoplasm. In terms of biological role, an essential GTPase which binds GTP, GDP and possibly (p)ppGpp with moderate affinity, with high nucleotide exchange rates and a fairly low GTP hydrolysis rate. Plays a role in control of the cell cycle, stress response, ribosome biogenesis and in those bacteria that undergo differentiation, in morphogenesis control. The chain is GTPase Obg from Ehrlichia chaffeensis (strain ATCC CRL-10679 / Arkansas).